We begin with the raw amino-acid sequence, 79 residues long: Sulfur carrier protein TusA (79 aa).

The Cysteine persulfide intermediate role is filled by Cys17.

Belongs to the sulfur carrier protein TusA family.

It localises to the cytoplasm. Functionally, sulfur carrier protein which probably makes part of a sulfur-relay system. The polypeptide is Sulfur carrier protein TusA (Actinobacillus pleuropneumoniae serotype 5b (strain L20)).